The following is a 156-amino-acid chain: Small ribosomal subunit protein uS7 (156 aa).

Belongs to the universal ribosomal protein uS7 family. In terms of assembly, part of the 30S ribosomal subunit. Contacts proteins S9 and S11.

Its function is as follows. One of the primary rRNA binding proteins, it binds directly to 16S rRNA where it nucleates assembly of the head domain of the 30S subunit. Is located at the subunit interface close to the decoding center, probably blocks exit of the E-site tRNA. The chain is Small ribosomal subunit protein uS7 from Neisseria meningitidis serogroup C (strain 053442).